A 189-amino-acid chain; its full sequence is Elongation factor P (189 aa).

It belongs to the elongation factor P family.

It is found in the cytoplasm. It participates in protein biosynthesis; polypeptide chain elongation. In terms of biological role, involved in peptide bond synthesis. Stimulates efficient translation and peptide-bond synthesis on native or reconstituted 70S ribosomes in vitro. Probably functions indirectly by altering the affinity of the ribosome for aminoacyl-tRNA, thus increasing their reactivity as acceptors for peptidyl transferase. The chain is Elongation factor P from Campylobacter fetus subsp. fetus (strain 82-40).